A 149-amino-acid chain; its full sequence is Transcriptional repressor NrdR (149 aa).

A zinc finger lies at 3-34; sequence CPFCSHSETQVVETRISEDGDSIRRRRQCASC. The ATP-cone domain occupies 49–139; sequence PAIVKKDGRR…VYRSFEDIDE (91 aa).

This sequence belongs to the NrdR family. It depends on Zn(2+) as a cofactor.

Functionally, negatively regulates transcription of bacterial ribonucleotide reductase nrd genes and operons by binding to NrdR-boxes. This chain is Transcriptional repressor NrdR, found in Albidiferax ferrireducens (strain ATCC BAA-621 / DSM 15236 / T118) (Rhodoferax ferrireducens).